The following is a 395-amino-acid chain: L-lactate dehydrogenase (395 aa).

The FMN hydroxy acid dehydrogenase domain occupies 1-380; that stretch reads MIISAASDYR…SKDSLVQELS (380 aa). Position 24 (Tyr-24) interacts with substrate. FMN contacts are provided by Ser-106 and Gln-127. Substrate is bound at residue Tyr-129. Position 155 (Thr-155) interacts with FMN. Arg-164 serves as a coordination point for substrate. Lys-251 serves as a coordination point for FMN. His-275 serves as the catalytic Proton acceptor. Position 278 (Arg-278) interacts with substrate. 306-330 lines the FMN pocket; it reads DSGIRNGLDVVRMIALGADSVLLGR.

This sequence belongs to the FMN-dependent alpha-hydroxy acid dehydrogenase family. FMN is required as a cofactor.

Its subcellular location is the cell inner membrane. It catalyses the reaction (S)-lactate + A = pyruvate + AH2. Functionally, catalyzes the conversion of L-lactate to pyruvate. Is coupled to the respiratory chain. The chain is L-lactate dehydrogenase from Enterobacter sp. (strain 638).